Consider the following 506-residue polypeptide: Epstein-Barr nuclear antigen leader protein (506 aa).

Disordered stretches follow at residues 1 to 470 and 485 to 506; these read MGDR…PRPP and FEPP…EDED. A Phosphoserine; by host modification is found at serine 35.

It belongs to the lymphocryptovirus EBNA-LP family. Homooligomer. Interacts with host SP100; this interaction is important for EBNA-LP coactivator activity. Interacts with host HAX1, ERR1 and HSPA2. Interacts with host PRKDC and AKAP8L; these interactions modulate the coactivator function of EBNA-LP. Post-translationally, phosphorylated by the cellular protein kinase cdc2.

It localises to the host nucleus. Plays an important role in the establishment of B-cell immortalization by acting as an EBNA2 coactivator. This transcriptional activation preferentially enhances the expression of the major viral protein LMP1. The interaction between EBNA-LP and host SP100 correlates with coactivation of EBNA2 and the relocalization of SP100 from PML nuclear bodies into nucleoplasm. In Epstein-Barr virus (strain B95-8) (HHV-4), this protein is Epstein-Barr nuclear antigen leader protein (EBNA-LP).